The primary structure comprises 394 residues: Ceramide glucosyltransferase (394 aa).

At 1–10 (MAVLDLALQG) the chain is on the lumenal side. Residues 11–32 (LAIFGCVLFFVLWFMHFLSIVY) traverse the membrane as a helical segment. Residues 33–195 (TRLHLNKKVS…QVYFGTSHPR (163 aa)) lie on the Cytoplasmic side of the membrane. A short sequence motif (D1) is located at residue D92. A short sequence motif (D2) is located at residue D144. The chain crosses the membrane as a helical span at residues 196–215 (SYISANVTGFKCVTGMSCLM). At 216–287 (RKEVLDQAGG…KLRINMLPAT (72 aa)) the chain is on the lumenal side. Residue D236 is a short sequence motif, D3. D236 serves as the catalytic Proton acceptor. The (Q/R)XXRW signature appears at 272–276 (RMIRW). The helical transmembrane segment at 288 to 304 (IICEPISECFVASLIIG) threads the bilayer. The Cytoplasmic portion of the chain corresponds to 305–309 (WAAHH). The chain crosses the membrane as a helical span at residues 310–328 (IFRWDIMVFFMCHCLAWFI). Residues 329–348 (FDYIQLRGVQGGPLNFSKLD) are Lumenal-facing. A helical membrane pass occupies residues 349–369 (YAVAWFIRESMTIYIFLSALW). Residues 370–394 (DPTISWRTGRYRLRCGGTAEEILDV) are Cytoplasmic-facing.

This sequence belongs to the glycosyltransferase 2 family.

The protein resides in the golgi apparatus membrane. It carries out the reaction an N-acylsphing-4-enine + UDP-alpha-D-glucose = a beta-D-glucosyl-(1&lt;-&gt;1')-N-acylsphing-4-enine + UDP + H(+). The catalysed reaction is UDP-alpha-D-xylose + an N-acylsphing-4-enine = a beta-D-xylosyl-(1&lt;-&gt;1')-N-acylsphing-4-enine + UDP + H(+). The enzyme catalyses N-(9Z-octadecenoyl)-sphing-4-enine + UDP-alpha-D-xylose = beta-D-xylosyl-(1&lt;-&gt;1')-N-(9Z-octadecenoyl)-sphing-4-enine + UDP + H(+). It participates in lipid metabolism; sphingolipid metabolism. In terms of biological role, participates in the initial step of the glucosylceramide-based glycosphingolipid/GSL synthetic pathway at the cytosolic surface of the Golgi. Catalyzes the transfer of glucose from UDP-glucose to ceramide to produce glucosylceramide/GlcCer (such as beta-D-glucosyl-(1&lt;-&gt;1')-N-acylsphing-4-enine). Glucosylceramide is the core component of glycosphingolipids/GSLs, amphipathic molecules consisting of a ceramide lipid moiety embedded in the outer leaflet of the membrane, linked to one of hundreds of different externally oriented oligosaccharide structures. Glycosphingolipids are essential components of membrane microdomains that mediate membrane trafficking and signal transduction. They are implicated in many fundamental cellular processes, including growth, differentiation, migration, morphogenesis, cell-to-cell and cell-to-matrix interactions. Catalyzes the synthesis of xylosylceramide/XylCer (such as beta-D-xylosyl-(1&lt;-&gt;1')-N-acylsphing-4-enine) using UDP-Xyl as xylose donor. The sequence is that of Ceramide glucosyltransferase (ugcg) from Xenopus tropicalis (Western clawed frog).